The chain runs to 123 residues: MAKIKARDLRGKKKEELLKQLDDLKVELSQLRVAKVTGGAASKLSKIRVVRKSIARVLTVINQTQKENLRKFYKGKKYKPLDLRPKKTRAMRRRLNKHEESLKTKKQQRKERLYPLRKYAVKA.

Lysine 19 carries the N6-acetyllysine modification. Lysine 25 is covalently cross-linked (Glycyl lysine isopeptide (Lys-Gly) (interchain with G-Cter in SUMO2)). Serine 29 carries the phosphoserine modification. Lysine 43 carries the N6-acetyllysine modification. The tract at residues 85-123 (PKKTRAMRRRLNKHEESLKTKKQQRKERLYPLRKYAVKA) is disordered. The span at 86-96 (KKTRAMRRRLN) shows a compositional bias: basic residues.

Belongs to the universal ribosomal protein uL29 family. As to quaternary structure, component of the large ribosomal subunit.

It localises to the cytoplasm. Its function is as follows. Component of the large ribosomal subunit. The ribosome is a large ribonucleoprotein complex responsible for the synthesis of proteins in the cell. The sequence is that of Large ribosomal subunit protein uL29 (RPL35) from Oryctolagus cuniculus (Rabbit).